The chain runs to 889 residues: Serine/threonine-protein kinase D3 (889 aa).

Serine 27, serine 37, serine 41, and serine 44 each carry phosphoserine. Residues 154-204 form a Phorbol-ester/DAG-type 1 zinc finger; that stretch reads PHALYVHSYKAPTFCDYCGEMLWGLVRQGLKCEGCGLNYHKRCAFKIPNNC. A phosphoserine mark is found at serine 213 and serine 216. A Phorbol-ester/DAG-type 2 zinc finger spans residues 271–321; that stretch reads PHTFAVHSYGRPTICQYCKRLLKGLFRQGMQCKDCKFNCHKRCASKVPRDC. Residues 336-370 are disordered; it reads TDADMPMDIDSSDVNSDGSRGLDDSEEPSPPEDKM. Phosphoserine is present on residues serine 346, serine 391, and serine 395. The 117-residue stretch at 416-532 folds into the PH domain; sequence TVVKEGWMVH…WEKAIRQALM (117 aa). Tyrosine 426 carries the post-translational modification Phosphotyrosine. Serine 442 is subject to Phosphoserine. Tyrosine 457 is modified (phosphotyrosine). Position 535 is a phosphothreonine (threonine 535). The residue at position 539 (serine 539) is a Phosphoserine. Residues 575 to 831 enclose the Protein kinase domain; that stretch reads IFADEVLGSG…VDKSLSHPWL (257 aa). ATP is bound by residues 581–589 and lysine 604; that span reads LGSGQFGIV. Aspartate 698 acts as the Proton acceptor in catalysis. The residue at position 730 (serine 730) is a Phosphoserine; by PKC. The residue at position 734 (serine 734) is a Phosphoserine; by autocatalysis. Position 741 is a phosphotyrosine (tyrosine 741).

Belongs to the protein kinase superfamily. CAMK Ser/Thr protein kinase family. PKD subfamily. Requires Mg(2+) as cofactor.

The protein resides in the cytoplasm. The protein localises to the membrane. The catalysed reaction is L-seryl-[protein] + ATP = O-phospho-L-seryl-[protein] + ADP + H(+). The enzyme catalyses L-threonyl-[protein] + ATP = O-phospho-L-threonyl-[protein] + ADP + H(+). Activated by DAG and phorbol esters. Phorbol-ester/DAG-type domains 1 and 2 bind both DAG and phorbol ester with high affinity and mediate translocation to the cell membrane. Autophosphorylation of Ser-734 and phosphorylation of Ser-730 by PKC relieves auto-inhibition by the PH domain. Its function is as follows. Converts transient diacylglycerol (DAG) signals into prolonged physiological effects, downstream of PKC. Involved in resistance to oxidative stress. The sequence is that of Serine/threonine-protein kinase D3 (Prkd3) from Mus musculus (Mouse).